Reading from the N-terminus, the 340-residue chain is Galactoside alpha-(1,2)-fucosyltransferase 2 (340 aa).

Topologically, residues 1-7 are cytoplasmic; that stretch reads MLSMQAS. A helical; Signal-anchor for type II membrane protein transmembrane segment spans residues 8–28; the sequence is FFFPTGPFILFVFTASTIFHL. Topologically, residues 29-340 are lumenal; it reads QQRMVKIQPT…EADLSPLLKH (312 aa). N185, N251, N279, and N305 each carry an N-linked (GlcNAc...) asparagine glycan.

The protein localises to the golgi apparatus. Its subcellular location is the golgi stack membrane. It catalyses the reaction a beta-D-galactosyl-(1-&gt;3)-N-acetyl-beta-D-glucosaminyl derivative + GDP-beta-L-fucose = an alpha-L-Fuc-(1-&gt;2)-beta-D-Gal-(1-&gt;3)-beta-D-GlcNAc derivative + GDP + H(+). The catalysed reaction is a beta-D-galactosyl-(1-&gt;4)-N-acetyl-beta-D-glucosaminyl derivative + GDP-beta-L-fucose = an alpha-L-Fuc-(1-&gt;2)-beta-D-Gal-(1-&gt;4)-beta-D-GlcNAc derivative + GDP + H(+). It carries out the reaction a neolactoside nLc4Cer + GDP-beta-L-fucose = a neolactoside IV(2)-alpha-Fuc-nLc4Cer + GDP + H(+). The enzyme catalyses a neolactoside nLc4Cer(d18:1(4E)) + GDP-beta-L-fucose = a neolactoside IV(2)-alpha-Fuc-nLc4Cer(d18:1(4E)) + GDP + H(+). It catalyses the reaction a ganglioside GM1 + GDP-beta-L-fucose = a ganglioside Fuc-GM1 + GDP + H(+). The catalysed reaction is a ganglioside GA1 + GDP-beta-L-fucose = a ganglioside Fuc-GA1 + GDP + H(+). It carries out the reaction Lc4Cer + GDP-beta-L-fucose = alpha-L-fucosyl-(1-&gt;2)-beta-D-galactosyl-(1-&gt;3)-N-acetyl-beta-D-glucosaminyl-(1-&gt;3)-beta-D-galactosyl-(1-&gt;4)-beta-D-glucosyl-(1&lt;-&gt;1')-ceramide + GDP + H(+). The enzyme catalyses a beta-D-Gal-(1-&gt;3)-beta-D-GlcNAc-(1-&gt;3)-beta-D-Gal-(1-&gt;4)-beta-D-Glc-(1&lt;-&gt;1')-Cer(d18:1(4E)) + GDP-beta-L-fucose = alpha-L-fucosyl-(1-&gt;2)- beta-D-galactosyl-(1-&gt;3)-N-acetyl-beta-D-glucosaminyl-(1-&gt;3)-beta-D-galactosyl-(1-&gt;4)-beta-D-glucosyl-(1&lt;-&gt;1')-N-acylsphing-4-enine + GDP + H(+). It catalyses the reaction a ganglioside GD1b + GDP-beta-L-fucose = a ganglioside Fuc-GD1b + GDP + H(+). The catalysed reaction is a ganglioside GM1 (d18:1(4E)) + GDP-beta-L-fucose = a ganglioside Fuc-GM1 (d18:1(4E)) + GDP + H(+). It carries out the reaction a globoside GalGb4Cer (d18:1(4E)) + GDP-beta-L-fucose = a globoside Globo-H (d18:1(4E)) + GDP + H(+). The enzyme catalyses a lactoside III(4)-a-Fuc-Lc4Cer + GDP-beta-L-fucose = a lactoside IV(2),III(4)-a-[Fuc]2-Lc4Cer + GDP + H(+). It catalyses the reaction beta-D-galactosyl-(1-&gt;3)-N-acetyl-D-galactosamine + GDP-beta-L-fucose = alpha-L-fucosyl-(1-&gt;2)-beta-D-galactosyl-(1-&gt;3)-N-acetyl-D-galactosamine + GDP + H(+). Its pathway is protein modification; protein glycosylation. Catalyzes the transfer of L-fucose, from a guanosine diphosphate-beta-L-fucose, to the terminal galactose on both O- and N-linked glycans chains of cell surface glycoproteins and glycolipids and the resulting epitope regulates several processes such as cell-cell interaction including host-microbe interaction, cell surface expression and cell proliferation. Preferentially fucosylates gangliosides GA1 and GM1 in the antrum, cecum and colon and in the female reproductive organs. Fucosylated host glycoproteins or glycolipids mediate interaction with intestinal microbiota influencing its composition. Creates a soluble precursor oligosaccharide FuC-alpha ((1,2)Galbeta-) called the H antigen which is an essential substrate for the final step in the soluble ABO blood group antigen synthesis pathway. The chain is Galactoside alpha-(1,2)-fucosyltransferase 2 from Sus scrofa (Pig).